Consider the following 595-residue polypeptide: 3-hydroxy-3-methylglutaryl-coenzyme A reductase 2 (595 aa).

Asparagine 35 is a glycosylation site (N-linked (GlcNAc...) asparagine). 2 helical membrane-spanning segments follow: residues 48–68 (LPLY…MYFL) and 92–112 (AIVS…IGFV). The tract at residues 113–183 (QTFVSRGNND…SPLITPASSE (71 aa)) is linker. N-linked (GlcNAc...) asparagine glycosylation is present at asparagine 121. Positions 184–595 (EDEEIINSVV…KYNRSTKASS (412 aa)) are catalytic. Glutamate 278 (charge relay system) is an active-site residue. Asparagine 342 carries N-linked (GlcNAc...) asparagine glycosylation. Residue lysine 410 is the Charge relay system of the active site. An N-linked (GlcNAc...) asparagine glycan is attached at asparagine 455. Aspartate 486 acts as the Charge relay system in catalysis. Histidine 584 (proton donor) is an active-site residue. N-linked (GlcNAc...) asparagine glycosylation occurs at asparagine 588.

Belongs to the HMG-CoA reductase family. In terms of tissue distribution, expressed in young flowers and in mature sepals and ovaries.

Its subcellular location is the endoplasmic reticulum membrane. It carries out the reaction (R)-mevalonate + 2 NADP(+) + CoA = (3S)-3-hydroxy-3-methylglutaryl-CoA + 2 NADPH + 2 H(+). It participates in metabolic intermediate biosynthesis; (R)-mevalonate biosynthesis; (R)-mevalonate from acetyl-CoA: step 3/3. In terms of biological role, catalyzes the synthesis of mevalonate. The specific precursor of all isoprenoid compounds present in plants. This Solanum tuberosum (Potato) protein is 3-hydroxy-3-methylglutaryl-coenzyme A reductase 2 (HMG2).